We begin with the raw amino-acid sequence, 165 residues long: Chorismate pyruvate-lyase (165 aa).

Substrate-binding residues include M35, R77, L115, and E156.

Belongs to the UbiC family. Monomer.

The protein localises to the cytoplasm. It carries out the reaction chorismate = 4-hydroxybenzoate + pyruvate. It participates in cofactor biosynthesis; ubiquinone biosynthesis. Removes the pyruvyl group from chorismate, with concomitant aromatization of the ring, to provide 4-hydroxybenzoate (4HB) for the ubiquinone pathway. In Escherichia coli O7:K1 (strain IAI39 / ExPEC), this protein is Chorismate pyruvate-lyase.